Reading from the N-terminus, the 339-residue chain is Deubiquitinase and deneddylase Dub2 (339 aa).

A helical transmembrane segment spans residues I36 to F56. Active-site residues include H203, D220, and C282.

The protein belongs to the peptidase C48 family.

Its subcellular location is the secreted. It is found in the host cell. The protein localises to the membrane. Effector proteins function to alter host cell physiology and promote bacterial survival in host tissues. This protease possesses deubiquitinating and deneddylating activities. The polypeptide is Deubiquitinase and deneddylase Dub2 (cdu2) (Chlamydia trachomatis serovar A (strain ATCC VR-571B / DSM 19440 / HAR-13)).